The sequence spans 875 residues: Alanine--tRNA ligase (875 aa).

H564, H568, C666, and H670 together coordinate Zn(2+).

Belongs to the class-II aminoacyl-tRNA synthetase family. Homotetramer. Zn(2+) serves as cofactor.

It is found in the cytoplasm. It catalyses the reaction tRNA(Ala) + L-alanine + ATP = L-alanyl-tRNA(Ala) + AMP + diphosphate. Catalyzes the attachment of alanine to tRNA(Ala) in a two-step reaction: alanine is first activated by ATP to form Ala-AMP and then transferred to the acceptor end of tRNA(Ala). Also edits incorrectly charged Ser-tRNA(Ala) and Gly-tRNA(Ala) via its editing domain. The chain is Alanine--tRNA ligase from Citrobacter koseri (strain ATCC BAA-895 / CDC 4225-83 / SGSC4696).